Consider the following 1370-residue polypeptide: DNA-directed RNA polymerase subunit beta (1370 aa).

This sequence belongs to the RNA polymerase beta chain family. The RNAP catalytic core consists of 2 alpha, 1 beta, 1 beta' and 1 omega subunit. When a sigma factor is associated with the core the holoenzyme is formed, which can initiate transcription.

The catalysed reaction is RNA(n) + a ribonucleoside 5'-triphosphate = RNA(n+1) + diphosphate. In terms of biological role, DNA-dependent RNA polymerase catalyzes the transcription of DNA into RNA using the four ribonucleoside triphosphates as substrates. This chain is DNA-directed RNA polymerase subunit beta, found in Bordetella bronchiseptica (strain ATCC BAA-588 / NCTC 13252 / RB50) (Alcaligenes bronchisepticus).